The chain runs to 629 residues: tRNA uridine 5-carboxymethylaminomethyl modification enzyme MnmG (629 aa).

FAD contacts are provided by residues G15–G20, V127, and S182. Residues T203–P226 form a disordered region. The segment covering S215 to P226 has biased composition (basic and acidic residues). G274–F288 provides a ligand contact to NAD(+). Q371 is a binding site for FAD.

The protein belongs to the MnmG family. In terms of assembly, homodimer. Heterotetramer of two MnmE and two MnmG subunits. It depends on FAD as a cofactor.

The protein localises to the cytoplasm. Its function is as follows. NAD-binding protein involved in the addition of a carboxymethylaminomethyl (cmnm) group at the wobble position (U34) of certain tRNAs, forming tRNA-cmnm(5)s(2)U34. This Listeria innocua serovar 6a (strain ATCC BAA-680 / CLIP 11262) protein is tRNA uridine 5-carboxymethylaminomethyl modification enzyme MnmG.